The chain runs to 462 residues: Protoheme IX farnesyltransferase, mitochondrial (462 aa).

Transmembrane regions (helical) follow at residues 152 to 172 (LTILVTLSSICSYAISPYTVS), 173 to 193 (LPELLFLTMGTALCSGAANAI), 237 to 257 (MLFLGVNPTVSFLGFLNIVLY), 269 to 289 (IINTWVGAIVGAIPPLMGWAA), 296 to 316 (PGAWCLAGLLYAWQFPHFNAL), 348 to 368 (SLLMFPLCFGLSYFGITDWVF), and 411 to 431 (AKKLFWGSVWHLPAVLILAML).

Belongs to the UbiA prenyltransferase family.

The protein resides in the mitochondrion membrane. Functionally, converts protoheme IX and farnesyl diphosphate to heme O. The chain is Protoheme IX farnesyltransferase, mitochondrial (COX10) from Debaryomyces hansenii (strain ATCC 36239 / CBS 767 / BCRC 21394 / JCM 1990 / NBRC 0083 / IGC 2968) (Yeast).